Reading from the N-terminus, the 459-residue chain is Ribulose bisphosphate carboxylase (459 aa).

Residue Asn111 coordinates substrate. Lys166 (proton acceptor) is an active-site residue. Lys168 contacts substrate. Lys191, Asp193, and Glu194 together coordinate Mg(2+). Lys191 carries the N6-carboxylysine modification. The active-site Proton acceptor is His287. Arg288, His321, and Ser368 together coordinate substrate.

It belongs to the RuBisCO large chain family. Type II subfamily. In terms of assembly, homodimer. Mg(2+) is required as a cofactor.

The catalysed reaction is 2 (2R)-3-phosphoglycerate + 2 H(+) = D-ribulose 1,5-bisphosphate + CO2 + H2O. It catalyses the reaction D-ribulose 1,5-bisphosphate + O2 = 2-phosphoglycolate + (2R)-3-phosphoglycerate + 2 H(+). In terms of biological role, ruBisCO catalyzes two reactions: the carboxylation of D-ribulose 1,5-bisphosphate, the primary event in carbon dioxide fixation, as well as the oxidative fragmentation of the pentose substrate. Both reactions occur simultaneously and in competition at the same active site. The sequence is that of Ribulose bisphosphate carboxylase from Polaromonas naphthalenivorans (strain CJ2).